The following is a 173-amino-acid chain: T-cell receptor beta-1 chain C region (173 aa).

The segment at 1–146 (EDLRNVTPPK…GVLSATILYE (146 aa)) is c region. An intrachain disulfide couples C31 to C71. N-linked (GlcNAc...) asparagine glycans are attached at residues N67 and N116. A helical membrane pass occupies residues 146-167 (EILLGKATLYAVLVSTLVVMAM). Residues 168–173 (VKRKNS) are Cytoplasmic-facing.

The protein localises to the membrane. This is T-cell receptor beta-1 chain C region from Mus musculus (Mouse).